Reading from the N-terminus, the 160-residue chain is Small ribosomal subunit protein uS7 (160 aa).

This sequence belongs to the universal ribosomal protein uS7 family. As to quaternary structure, part of the 30S ribosomal subunit. Contacts proteins S9 and S11.

Its function is as follows. One of the primary rRNA binding proteins, it binds directly to 16S rRNA where it nucleates assembly of the head domain of the 30S subunit. Is located at the subunit interface close to the decoding center, probably blocks exit of the E-site tRNA. In Rickettsia typhi (strain ATCC VR-144 / Wilmington), this protein is Small ribosomal subunit protein uS7.